Consider the following 427-residue polypeptide: GTPase Obg (427 aa).

The 158-residue stretch at 1–158 folds into the Obg domain; that stretch reads MFVDKVKVYV…RDVILELKVL (158 aa). The disordered stretch occupies residues 118 to 144; that stretch reads KGGRGGRGNTRFATPANPAPELSENGE. One can recognise an OBG-type G domain in the interval 159–329; sequence ADAGLVGFPS…LLRAIMDTIE (171 aa). GTP is bound by residues 165–172, 190–194, 212–215, 282–285, and 310–312; these read GFPSVGKS, FTTIT, DLPG, NKMD, and SAL. Mg(2+) contacts are provided by Ser-172 and Thr-192. An OCT domain is found at 349-427; that stretch reads KHDKEQDPFV…LLEFEFEFIE (79 aa).

The protein belongs to the TRAFAC class OBG-HflX-like GTPase superfamily. OBG GTPase family. In terms of assembly, monomer. Requires Mg(2+) as cofactor.

Its subcellular location is the cytoplasm. In terms of biological role, an essential GTPase which binds GTP, GDP and possibly (p)ppGpp with moderate affinity, with high nucleotide exchange rates and a fairly low GTP hydrolysis rate. Plays a role in control of the cell cycle, stress response, ribosome biogenesis and in those bacteria that undergo differentiation, in morphogenesis control. In Halalkalibacterium halodurans (strain ATCC BAA-125 / DSM 18197 / FERM 7344 / JCM 9153 / C-125) (Bacillus halodurans), this protein is GTPase Obg.